Consider the following 365-residue polypeptide: Alanine racemase (365 aa).

Catalysis depends on Lys-32, which acts as the Proton acceptor; specific for D-alanine. The residue at position 32 (Lys-32) is an N6-(pyridoxal phosphate)lysine. Residue Arg-128 coordinates substrate. Tyr-257 functions as the Proton acceptor; specific for L-alanine in the catalytic mechanism. Met-305 contacts substrate.

Belongs to the alanine racemase family. Pyridoxal 5'-phosphate is required as a cofactor.

The enzyme catalyses L-alanine = D-alanine. It participates in amino-acid biosynthesis; D-alanine biosynthesis; D-alanine from L-alanine: step 1/1. Functionally, catalyzes the interconversion of L-alanine and D-alanine. May also act on other amino acids. This is Alanine racemase (alr) from Francisella tularensis subsp. tularensis (strain WY96-3418).